The chain runs to 869 residues: MSDASTPLMRQYNSIKEQVPNALLMFRLGDFYELFFEDAVTAARELEITLTARNKEKGNAIPMCGVPYHAAEGYISRLIQKGFRVAICDQVEDAKLAKKLVRREITRVVTPGTAMDSNLVRSRENNFLAAVGRSGSRSAVAHVDVSTGEFRVTEMEPEEVAGALEHLGAREVLFPGDLPLLTGEDRSGLRFVRTELEDWVFTHDYSDRTLRDHFKLLSLDGCGLANRAAAIGAAGAILHYLRDTQRAALDHLDRPTYYDRADSMVLDSVTVRNLELIEPLFAADAGGIHAQPTVLGVLDQTLTGMGGRLLRQRLLRPSMNRAEIEQRLDAVGELQQQTILRAELRKQLSGILDLERLLAKVTLGSAGPRDVLALGRSLEKIPALKRCFDTQQAARLRNLHDRLDELADVASLILDCISDEPPLNLVDGGTIRAGFHPELDELRDLSQNGKQYIAQIEARERQRTGIGSLKVRFNNVFGYYIEITRANQHLAPADYERKQTLANAERFTTPELKDYERKVLDAEDKILTLEKELFSDVRKRAAAHAQRIRAAAAAVAELDVTASLAQVAAENRYQRPCFSDSGEMRIMAGRHPVIERLTEQEAGRFIPNDLYLNDSTDLLAIITGPNMGGKSTYLRQAALIAILAQIGSFVPAESASLPVIDRIFTRIGASDNLARGRSTFMVEMTETAVILNTATPRSFIVLDEVGRGTATYDGLALAWAVVEYIHQRTRAKTLFATHYHELTELAEQLSGVRNLMVSVKEAGDHIIFLRKVEPGKADRSYGIEVARLAGLPISVIERARDVLKLHERTEHAVSGELVKSEDHGPVQIQMFEPVGYGIAERIRAINVDELRPIEALQLLSELQKELKRS.

Position 624–631 (624–631 (GPNMGGKS)) interacts with ATP.

It belongs to the DNA mismatch repair MutS family.

Functionally, this protein is involved in the repair of mismatches in DNA. It is possible that it carries out the mismatch recognition step. This protein has a weak ATPase activity. The chain is DNA mismatch repair protein MutS from Solibacter usitatus (strain Ellin6076).